Reading from the N-terminus, the 122-residue chain is Large ribosomal subunit protein uL14 (122 aa).

This sequence belongs to the universal ribosomal protein uL14 family. Part of the 50S ribosomal subunit. Forms a cluster with proteins L3 and L19. In the 70S ribosome, L14 and L19 interact and together make contacts with the 16S rRNA in bridges B5 and B8.

In terms of biological role, binds to 23S rRNA. Forms part of two intersubunit bridges in the 70S ribosome. The chain is Large ribosomal subunit protein uL14 from Alkalilimnicola ehrlichii (strain ATCC BAA-1101 / DSM 17681 / MLHE-1).